We begin with the raw amino-acid sequence, 580 residues long: Glyco-Gag protein (580 aa).

Over 1 to 51 (MSGASSGTAIGAHLFGVSPEYRVLIGDGGAGPSKSLSEVSFSVWYRSRAAR) the chain is Cytoplasmic. The helical transmembrane segment at 52 to 72 (LVILCLVASFLVPCLTFLIAE) threads the bilayer. Over 73–580 (AVMGQTVTTP…ANSTLLNLED (508 aa)) the chain is Extracellular. N-linked (GlcNAc...) asparagine; by host glycosylation is present at asparagine 134. Disordered regions lie at residues 171–282 (VRPF…NRPQ), 491–514 (ETPE…RHKE), and 560–580 (RDCP…NLED). Over residues 174-193 (FLPPPKPPTPLPQPLSPQPS) the composition is skewed to pro residues. Residues 194–203 (APLTSSLYPV) show a composition bias toward low complexity. Composition is skewed to pro residues over residues 204–220 (VPKP…PDPS) and 230–245 (EPPP…PSGP). Over residues 491 to 508 (ETPEEREERLWQRQEERD) the composition is skewed to basic and acidic residues. The span at 571 to 580 (ANSTLLNLED) shows a compositional bias: polar residues. An N-linked (GlcNAc...) asparagine; by host glycan is attached at asparagine 572.

Post-translationally, glycosylated by host. In terms of processing, cleaved by host near the middle of the molecule, releasing the c-terminal half containing capsid and nucleoprotein domains op GAG.

It localises to the host cell membrane. In terms of biological role, plays a role in viral particle release. Presumably acts by facilitating the fission of the virion bud at the cell surface. The sequence is that of Glyco-Gag protein from Feline leukemia virus.